Consider the following 176-residue polypeptide: Warthog protein 5 (176 aa).

Residues 1–21 (MCSMWLMASWLMAFVAGSTLA) form the signal peptide. N70 carries an N-linked (GlcNAc...) asparagine glycan.

Expressed in seam cells, excretory cell, reproductive system, pharynx, pharyngeal-intestinal valve cells, neurons and neuronal support cells.

The protein localises to the secreted. In terms of biological role, intercellular signal essential for a variety of patterning events during development. The chain is Warthog protein 5 (wrt-5) from Caenorhabditis elegans.